A 460-amino-acid polypeptide reads, in one-letter code: UDP-N-acetylmuramoylalanine--D-glutamate ligase (460 aa).

Residue 122-128 participates in ATP binding; it reads GSNGKST.

It belongs to the MurCDEF family.

It localises to the cytoplasm. It catalyses the reaction UDP-N-acetyl-alpha-D-muramoyl-L-alanine + D-glutamate + ATP = UDP-N-acetyl-alpha-D-muramoyl-L-alanyl-D-glutamate + ADP + phosphate + H(+). Its pathway is cell wall biogenesis; peptidoglycan biosynthesis. In terms of biological role, cell wall formation. Catalyzes the addition of glutamate to the nucleotide precursor UDP-N-acetylmuramoyl-L-alanine (UMA). The chain is UDP-N-acetylmuramoylalanine--D-glutamate ligase from Jannaschia sp. (strain CCS1).